The following is a 163-amino-acid chain: uncharacterized protein (163 aa).

Positions 30–163 (GNENTSVSSD…IYKKLGKKKR (134 aa)) are disordered. A compositionally biased stretch (basic and acidic residues) spans 88-118 (ERQLQKKKEAEKIEGGKNHDNLKRKLNKVGD). The span at 119–133 (ELNEQQSDTDDDDDD) shows a compositional bias: acidic residues. Phosphoserine is present on Ser-125. At Thr-127 the chain carries Phosphothreonine.

The protein localises to the nucleus. Its subcellular location is the nucleolus. This is an uncharacterized protein from Schizosaccharomyces pombe (strain 972 / ATCC 24843) (Fission yeast).